The chain runs to 79 residues: Small ribosomal subunit protein bS18 (79 aa).

The protein belongs to the bacterial ribosomal protein bS18 family. In terms of assembly, part of the 30S ribosomal subunit. Forms a tight heterodimer with protein bS6.

In terms of biological role, binds as a heterodimer with protein bS6 to the central domain of the 16S rRNA, where it helps stabilize the platform of the 30S subunit. The protein is Small ribosomal subunit protein bS18 of Pseudarthrobacter chlorophenolicus (strain ATCC 700700 / DSM 12829 / CIP 107037 / JCM 12360 / KCTC 9906 / NCIMB 13794 / A6) (Arthrobacter chlorophenolicus).